A 263-amino-acid polypeptide reads, in one-letter code: HTH-type transcriptional repressor NanR (263 aa).

The disordered stretch occupies residues 1–22 (MGLMNAFDSQTEDSSPAIGRNL). The region spanning 30-98 (KKLSEMVEEE…NGERARVSRP (69 aa)) is the HTH gntR-type domain. The segment at residues 58 to 77 (ERELMAFFNVGRPSVREALA) is a DNA-binding region (H-T-H motif).

This sequence belongs to the NanR family.

Functionally, transcriptional repressor that controls expression of the genes required for the catabolism of sialic acids. The chain is HTH-type transcriptional repressor NanR from Shigella sonnei (strain Ss046).